Consider the following 557-residue polypeptide: 2-succinyl-5-enolpyruvyl-6-hydroxy-3-cyclohexene-1-carboxylate synthase (557 aa).

The protein belongs to the TPP enzyme family. MenD subfamily. As to quaternary structure, homodimer. Mg(2+) is required as a cofactor. Requires Mn(2+) as cofactor. Thiamine diphosphate serves as cofactor.

The catalysed reaction is isochorismate + 2-oxoglutarate + H(+) = 5-enolpyruvoyl-6-hydroxy-2-succinyl-cyclohex-3-ene-1-carboxylate + CO2. It functions in the pathway quinol/quinone metabolism; 1,4-dihydroxy-2-naphthoate biosynthesis; 1,4-dihydroxy-2-naphthoate from chorismate: step 2/7. It participates in quinol/quinone metabolism; menaquinone biosynthesis. Functionally, catalyzes the thiamine diphosphate-dependent decarboxylation of 2-oxoglutarate and the subsequent addition of the resulting succinic semialdehyde-thiamine pyrophosphate anion to isochorismate to yield 2-succinyl-5-enolpyruvyl-6-hydroxy-3-cyclohexene-1-carboxylate (SEPHCHC). This chain is 2-succinyl-5-enolpyruvyl-6-hydroxy-3-cyclohexene-1-carboxylate synthase, found in Staphylococcus aureus (strain USA300).